A 994-amino-acid chain; its full sequence is Regulator of telomere elongation helicase 1 homolog (994 aa).

The Helicase ATP-binding domain occupies 15–300; the sequence is PKLSVKFPFE…EETARSEADA (286 aa). 50–57 contacts ATP; it reads SPTGTGKT. Residues C142, C160, C169, and C208 each contribute to the [4Fe-4S] cluster site. The DEAH box signature appears at 251–254; the sequence is DEAH. The disordered stretch occupies residues 876–895; sequence FKIETPGPSTSTLTQKSEPP. The segment covering 882–892 has biased composition (polar residues); sequence GPSTSTLTQKS.

This sequence belongs to the helicase family. RAD3/XPD subfamily.

The protein localises to the nucleus. It catalyses the reaction ATP + H2O = ADP + phosphate + H(+). A probable ATP-dependent DNA helicase implicated in DNA repair and the maintenance of genomic stability. Acts as an anti-recombinase to counteract toxic recombination and limit crossover during meiosis. Regulates meiotic recombination and crossover homeostasis by physically dissociating strand invasion events and thereby promotes noncrossover repair by meiotic synthesis dependent strand annealing (SDSA) as well as disassembly of D loop recombination intermediates. This chain is Regulator of telomere elongation helicase 1 homolog, found in Caenorhabditis elegans.